The chain runs to 429 residues: Glucose-1-phosphate adenylyltransferase (429 aa).

Alpha-D-glucose 1-phosphate is bound by residues G162, 177-178 (EK), and S209.

It belongs to the bacterial/plant glucose-1-phosphate adenylyltransferase family. Homotetramer.

The catalysed reaction is alpha-D-glucose 1-phosphate + ATP + H(+) = ADP-alpha-D-glucose + diphosphate. Its pathway is glycan biosynthesis; glycogen biosynthesis. Activated by 3-phosphoglycerate and inhibited by phosphate. Involved in the biosynthesis of ADP-glucose, a building block required for the elongation reactions to produce glycogen. Catalyzes the reaction between ATP and alpha-D-glucose 1-phosphate (G1P) to produce pyrophosphate and ADP-Glc. The protein is Glucose-1-phosphate adenylyltransferase of Nostoc sp. (strain PCC 7120 / SAG 25.82 / UTEX 2576).